The primary structure comprises 239 residues: Geranylgeranylglyceryl phosphate synthase (239 aa).

Mg(2+)-binding residues include Asp-19 and Ser-48. Residues 167 to 173 (YLEAGSG), 197 to 198 (GG), and 219 to 220 (GT) contribute to the sn-glycerol 1-phosphate site.

It belongs to the GGGP/HepGP synthase family. Group II subfamily. The cofactor is Mg(2+).

The protein localises to the cytoplasm. The enzyme catalyses sn-glycerol 1-phosphate + (2E,6E,10E)-geranylgeranyl diphosphate = sn-3-O-(geranylgeranyl)glycerol 1-phosphate + diphosphate. It functions in the pathway membrane lipid metabolism; glycerophospholipid metabolism. In terms of biological role, prenyltransferase that catalyzes the transfer of the geranylgeranyl moiety of geranylgeranyl diphosphate (GGPP) to the C3 hydroxyl of sn-glycerol-1-phosphate (G1P). This reaction is the first ether-bond-formation step in the biosynthesis of archaeal membrane lipids. The polypeptide is Geranylgeranylglyceryl phosphate synthase (Methanopyrus kandleri (strain AV19 / DSM 6324 / JCM 9639 / NBRC 100938)).